A 598-amino-acid polypeptide reads, in one-letter code: Aspartate--tRNA(Asp/Asn) ligase (598 aa).

Glu-177 is an L-aspartate binding site. The interval 201–204 (QLFK) is aspartate. Arg-223 contacts L-aspartate. ATP-binding positions include 223–225 (RDE) and Gln-232. Residue His-456 coordinates L-aspartate. Residue Glu-493 coordinates ATP. Arg-500 provides a ligand contact to L-aspartate. Residue 545–548 (GLDR) coordinates ATP.

It belongs to the class-II aminoacyl-tRNA synthetase family. Type 1 subfamily. As to quaternary structure, homodimer.

The protein localises to the cytoplasm. It catalyses the reaction tRNA(Asx) + L-aspartate + ATP = L-aspartyl-tRNA(Asx) + AMP + diphosphate. Aspartyl-tRNA synthetase with relaxed tRNA specificity since it is able to aspartylate not only its cognate tRNA(Asp) but also tRNA(Asn). Reaction proceeds in two steps: L-aspartate is first activated by ATP to form Asp-AMP and then transferred to the acceptor end of tRNA(Asp/Asn). The sequence is that of Aspartate--tRNA(Asp/Asn) ligase from Prochlorococcus marinus (strain MIT 9215).